The chain runs to 144 residues: Small ribosomal subunit protein eS12y (144 aa).

N-acetylserine is present on serine 2.

The protein belongs to the eukaryotic ribosomal protein eS12 family.

This is Small ribosomal subunit protein eS12y (RPS12C) from Arabidopsis thaliana (Mouse-ear cress).